The chain runs to 223 residues: 7-cyano-7-deazaguanine synthase (223 aa).

Residue 11 to 21 coordinates ATP; it reads ISGGMDSALAA. Zn(2+) contacts are provided by C189, C197, C200, and C203.

The protein belongs to the QueC family. Requires Zn(2+) as cofactor.

The enzyme catalyses 7-carboxy-7-deazaguanine + NH4(+) + ATP = 7-cyano-7-deazaguanine + ADP + phosphate + H2O + H(+). It participates in purine metabolism; 7-cyano-7-deazaguanine biosynthesis. Functionally, catalyzes the ATP-dependent conversion of 7-carboxy-7-deazaguanine (CDG) to 7-cyano-7-deazaguanine (preQ(0)). The polypeptide is 7-cyano-7-deazaguanine synthase (Campylobacter fetus subsp. fetus (strain 82-40)).